The sequence spans 232 residues: Orotate phosphoribosyltransferase (232 aa).

5-phospho-alpha-D-ribose 1-diphosphate-binding positions include R107, K108, K111, and 133–141 (EDLTTDGGS). Residue T137 participates in orotate binding.

Belongs to the purine/pyrimidine phosphoribosyltransferase family. PyrE subfamily. Homodimer. It depends on Mg(2+) as a cofactor.

It catalyses the reaction orotidine 5'-phosphate + diphosphate = orotate + 5-phospho-alpha-D-ribose 1-diphosphate. It participates in pyrimidine metabolism; UMP biosynthesis via de novo pathway; UMP from orotate: step 1/2. In terms of biological role, catalyzes the transfer of a ribosyl phosphate group from 5-phosphoribose 1-diphosphate to orotate, leading to the formation of orotidine monophosphate (OMP). This is Orotate phosphoribosyltransferase from Cereibacter sphaeroides (strain ATCC 17025 / ATH 2.4.3) (Rhodobacter sphaeroides).